A 285-amino-acid polypeptide reads, in one-letter code: MAIRSLFSGNRKKKEDGQEKAFPEGLMTKCPECRHIQLTKELEKNHKVCTKCSHHFKMTAQERVDYFLDEGSFVSMDDHLQTSNPLNFPAYVEKISADQEKTGLNEAVLTGVGTLDGEEIVVAIMDSHFRMGSMGSVVGEKITRAVEKATELGVPFIIFTASGGARMQEGVLSLMQMAKTSVALKRHSDQGLLFISILTHPTTGGVSASFASVGDINIAEPQALIGFAGRRVIEETVREKLPNDFQTAEFLLEHGQLDAIFPRKDLRKQVSLLVKMHTKGGVQHV.

The segment at 1–20 (MAIRSLFSGNRKKKEDGQEK) is disordered. The CoA carboxyltransferase N-terminal domain occupies 26–285 (LMTKCPECRH…MHTKGGVQHV (260 aa)). Residues Cys30, Cys33, Cys49, and Cys52 each coordinate Zn(2+). A C4-type zinc finger spans residues 30-52 (CPECRHIQLTKELEKNHKVCTKC).

The protein belongs to the AccD/PCCB family. In terms of assembly, acetyl-CoA carboxylase is a heterohexamer composed of biotin carboxyl carrier protein (AccB), biotin carboxylase (AccC) and two subunits each of ACCase subunit alpha (AccA) and ACCase subunit beta (AccD). The cofactor is Zn(2+).

The protein localises to the cytoplasm. It carries out the reaction N(6)-carboxybiotinyl-L-lysyl-[protein] + acetyl-CoA = N(6)-biotinyl-L-lysyl-[protein] + malonyl-CoA. It participates in lipid metabolism; malonyl-CoA biosynthesis; malonyl-CoA from acetyl-CoA: step 1/1. Its function is as follows. Component of the acetyl coenzyme A carboxylase (ACC) complex. Biotin carboxylase (BC) catalyzes the carboxylation of biotin on its carrier protein (BCCP) and then the CO(2) group is transferred by the transcarboxylase to acetyl-CoA to form malonyl-CoA. The protein is Acetyl-coenzyme A carboxylase carboxyl transferase subunit beta 2 of Lysinibacillus sphaericus (strain C3-41).